The primary structure comprises 488 residues: MRTNPLVLGVSALVEKNVGRIAQIIGPVLDVSFPPGNMPNIYNSLIVKGQGTAGQEIQVTCEVQQLLGNHKVRAVAMSATDGLTRGMRVIDTGAPLSVPVGGATLGRIFNVLGEPVDNLGPVDARITSPIHRSAPAFTELDTKLSIFETGIKVVDLLAPYRRGGKIGLFGGAGVGKTVLIMELINNIAKAHGGVSVFGGVGERTREGNDLYMEMKESGVIDEQNISESKVALVYGQMNEPPGARMRVGLTALTMAEYFRDVNEQDVLSFIDNIFRFVQAGSEVSALLGRMPSAVGYQPTLATEMGSLQERITSTKRGSITSIQAVYVPADDLTDPAPATTFAHLDATTVPSRGLAAKGIYPAVDPLDSTSTMLQPWIVGEEHYETAQGVKQTLQRYKELQDIIAIPGLDELSEEDRLIVARARKIERFLSQPFFVAEVFTGFPGKYVGLMETIRGFQMILSGELEQSFYLVGNIDEATAKAMNSKTES.

Position 170–177 (170–177 (GGAGVGKT)) interacts with ATP.

The protein belongs to the ATPase alpha/beta chains family. In terms of assembly, F-type ATPases have 2 components, CF(1) - the catalytic core - and CF(0) - the membrane proton channel. CF(1) has five subunits: alpha(3), beta(3), gamma(1), delta(1), epsilon(1). CF(0) has four main subunits: a(1), b(1), b'(1) and c(9-12).

Its subcellular location is the plastid. It localises to the chloroplast thylakoid membrane. It carries out the reaction ATP + H2O + 4 H(+)(in) = ADP + phosphate + 5 H(+)(out). Functionally, produces ATP from ADP in the presence of a proton gradient across the membrane. The catalytic sites are hosted primarily by the beta subunits. The protein is ATP synthase subunit beta, chloroplastic of Picea abies (Norway spruce).